The chain runs to 95 residues: Co-chaperonin GroES (95 aa).

It belongs to the GroES chaperonin family. In terms of assembly, heptamer of 7 subunits arranged in a ring. Interacts with the chaperonin GroEL.

The protein resides in the cytoplasm. Functionally, together with the chaperonin GroEL, plays an essential role in assisting protein folding. The GroEL-GroES system forms a nano-cage that allows encapsulation of the non-native substrate proteins and provides a physical environment optimized to promote and accelerate protein folding. GroES binds to the apical surface of the GroEL ring, thereby capping the opening of the GroEL channel. The polypeptide is Co-chaperonin GroES (Rickettsia prowazekii (strain Madrid E)).